Here is a 207-residue protein sequence, read N- to C-terminus: Urease accessory protein UreG (207 aa).

Residue 12-19 (GPVGAGKT) coordinates GTP.

This sequence belongs to the SIMIBI class G3E GTPase family. UreG subfamily. As to quaternary structure, homodimer. UreD, UreF and UreG form a complex that acts as a GTP-hydrolysis-dependent molecular chaperone, activating the urease apoprotein by helping to assemble the nickel containing metallocenter of UreC. The UreE protein probably delivers the nickel.

It is found in the cytoplasm. Functionally, facilitates the functional incorporation of the urease nickel metallocenter. This process requires GTP hydrolysis, probably effectuated by UreG. This is Urease accessory protein UreG from Cereibacter sphaeroides (strain ATCC 17025 / ATH 2.4.3) (Rhodobacter sphaeroides).